Here is a 218-residue protein sequence, read N- to C-terminus: Uridine kinase (218 aa).

ATP is bound at residue 16-23; that stretch reads GGSGSGKT.

This sequence belongs to the uridine kinase family.

It is found in the cytoplasm. The enzyme catalyses uridine + ATP = UMP + ADP + H(+). The catalysed reaction is cytidine + ATP = CMP + ADP + H(+). It functions in the pathway pyrimidine metabolism; CTP biosynthesis via salvage pathway; CTP from cytidine: step 1/3. The protein operates within pyrimidine metabolism; UMP biosynthesis via salvage pathway; UMP from uridine: step 1/1. The chain is Uridine kinase from Limosilactobacillus reuteri (strain DSM 20016) (Lactobacillus reuteri).